Consider the following 80-residue polypeptide: Large ribosomal subunit protein bL28 (80 aa).

Positions 1–21 are disordered; sequence MSRICQITRKKSMKGNSVAHS.

It belongs to the bacterial ribosomal protein bL28 family.

The chain is Large ribosomal subunit protein bL28 from Azobacteroides pseudotrichonymphae genomovar. CFP2.